A 347-amino-acid polypeptide reads, in one-letter code: Heat-inducible transcription repressor HrcA (347 aa).

It belongs to the HrcA family.

Its function is as follows. Negative regulator of class I heat shock genes (grpE-dnaK-dnaJ and groELS operons). Prevents heat-shock induction of these operons. The sequence is that of Heat-inducible transcription repressor HrcA from Lactobacillus delbrueckii subsp. bulgaricus (strain ATCC BAA-365 / Lb-18).